Reading from the N-terminus, the 142-residue chain is uncharacterized protein (142 aa).

Residues 1 to 9 (MDMVSPVLN) are Cytoplasmic-facing. Residues 10–30 (LQSSILGELVGIIGKVFFLLI) form a helical membrane-spanning segment. The Extracellular segment spans residues 31–41 (EEIKYPIITPK). A helical transmembrane segment spans residues 42–62 (IIVDAQISSWSLFFFASICNL). The Cytoplasmic portion of the chain corresponds to 63-101 (SAKFREPIVTTSSIISLMESEKDLKNVNEYFQIMAKMLF). The helical transmembrane segment at 102–122 (ILENKIVVSLFVVFNISVLII) threads the bilayer. The Extracellular segment spans residues 123–142 (VKSEPYSYGKVLFKPSSSIF).

Its subcellular location is the membrane. This is an uncharacterized protein from Saccharomyces cerevisiae (strain ATCC 204508 / S288c) (Baker's yeast).